The sequence spans 435 residues: Elongation factor 1-alpha (435 aa).

One can recognise a tr-type G domain in the interval 5-226 (KTHINLVVIG…DTMEPPKRPT (222 aa)). The G1 stretch occupies residues 14-21 (GHVDSGKS). Residue 14–21 (GHVDSGKS) participates in GTP binding. Residues 70 to 74 (GITID) are G2. The interval 91–94 (DAPG) is G3. Residues 91 to 95 (DAPGH) and 151 to 154 (NKMD) contribute to the GTP site. Positions 151 to 154 (NKMD) are G4. The tract at residues 190–192 (SGF) is G5.

Belongs to the TRAFAC class translation factor GTPase superfamily. Classic translation factor GTPase family. EF-Tu/EF-1A subfamily.

Its subcellular location is the cytoplasm. In terms of biological role, this protein promotes the GTP-dependent binding of aminoacyl-tRNA to the A-site of ribosomes during protein biosynthesis. The polypeptide is Elongation factor 1-alpha (Cryptosporidium parvum).